The chain runs to 525 residues: GMP synthase [glutamine-hydrolyzing] (525 aa).

The region spanning 9-207 is the Glutamine amidotransferase type-1 domain; that stretch reads RILILDFGSQ…VLTISGCEAL (199 aa). Cys-86 acts as the Nucleophile in catalysis. Residues His-181 and Glu-183 contribute to the active site. The region spanning 208 to 400 is the GMPS ATP-PPase domain; it reads WTPAKIVDDA…LGLPYDMVYR (193 aa). 235-241 serves as a coordination point for ATP; the sequence is SGGVDSS.

As to quaternary structure, homodimer.

It carries out the reaction XMP + L-glutamine + ATP + H2O = GMP + L-glutamate + AMP + diphosphate + 2 H(+). It functions in the pathway purine metabolism; GMP biosynthesis; GMP from XMP (L-Gln route): step 1/1. Functionally, catalyzes the synthesis of GMP from XMP. The polypeptide is GMP synthase [glutamine-hydrolyzing] (Marinobacter nauticus (strain ATCC 700491 / DSM 11845 / VT8) (Marinobacter aquaeolei)).